A 123-amino-acid polypeptide reads, in one-letter code: Nitrogenase-stabilizing/protective protein NifW (123 aa).

The protein belongs to the NifW family. Homotrimer; associates with NifD.

May protect the nitrogenase Fe-Mo protein from oxidative damage. This is Nitrogenase-stabilizing/protective protein NifW from Rhodopseudomonas palustris (strain HaA2).